The following is a 159-amino-acid chain: uncharacterized protein (159 aa).

Belongs to the SufE family.

This is an uncharacterized protein from Synechocystis sp. (strain ATCC 27184 / PCC 6803 / Kazusa).